Consider the following 1052-residue polypeptide: Mitotic checkpoint serine/threonine-protein kinase BUB1 beta (1052 aa).

Residues 56 to 219 enclose the BUB1 N-terminal domain; the sequence is FESEIRFYSG…LEPSEPQRSS (164 aa). The Nuclear localization signal signature appears at 105–112; that stretch reads GETRYYND. A necessary for interaction with KNL1 region spans residues 146–179; the sequence is AQFYISWAEEYEARENFKKADIIFQEGIERKAEP. Disordered regions lie at residues 206 to 256 and 272 to 327; these read EEEA…NAVP and ADTA…TSIP. The D-box signature appears at 217 to 225; it reads RSSLAELKS. K243 is subject to N6-acetyllysine; by PCAF. A Phosphoserine modification is found at S360. The interval 361 to 381 is disordered; sequence TRKPGREEGDPLQRVQSHQQG. Position 428 is a phosphoserine (S428). Positions 496–552 are disordered; that stretch reads SNPREISPAENILQEQPDSKGSSMPFSIFDESLSDKKDKSPATGGPQVLNAQRRPLS. Over residues 508–520 the composition is skewed to polar residues; sequence LQEQPDSKGSSMP. A phosphoserine mark is found at S535 and S659. Phosphoserine; by PLK1 is present on S665. S686 is subject to Phosphoserine. The 285-residue stretch at 756–1040 folds into the Protein kinase domain; it reads VIKQEHLTCD…TISPEALLTQ (285 aa). An ATP-binding site is contributed by 762-770; that stretch reads LTCDDYRLF. At T781 the chain carries Phosphothreonine; by PLK1. K784 provides a ligand contact to ATP. D871 functions as the Proton acceptor in the catalytic mechanism. Residue T998 is modified to Phosphothreonine; by PLK1. 2 positions are modified to phosphoserine: S1033 and S1050.

The protein belongs to the protein kinase superfamily. Ser/Thr protein kinase family. BUB1 subfamily. As to quaternary structure, interacts with CENPE. Interacts with PLK1. Part of a complex containing BUB3, CDC20 and BUB1B. Interacts with anaphase-promoting complex/cyclosome (APC/C). Interacts with KNL1. Interacts with KAT2B. Interacts with RIPK3. Interacts with the closed conformation form of MAD2L1. Interacts with CDC20. In terms of processing, proteolytically cleaved by caspase-3 in a cell cycle specific manner. The cleavage might be involved in the durability of the cell cycle delay. Acetylation at Lys-243 regulates its degradation and timing in anaphase entry. Post-translationally, ubiquitinated. Degraded by the proteasome. Ubiquitinated by UBR5, promoting disassembly of the mitotic checkpoint complex from the APC/C complex. In terms of processing, sumoylated with SUMO2 and SUMO3. The sumoylation mediates the association with CENPE at the kinetochore. Autophosphorylated in vitro. Intramolecular autophosphorylation stimulated by CENPE. Phosphorylated during mitosis and hyperphosphorylated in mitotically arrested cells. Phosphorylation at Ser-659 and Ser-1033 occurs at kinetochores upon mitotic entry with dephosphorylation at the onset of anaphase. Post-translationally, proteolytically cleaved by caspase-3 in a cell cycle specific manner. The cleavage might be involved in the durability of the cell cycle delay. Caspase-3 cleavage is associated with abrogation of the mitotic checkpoint. The major site of cleavage is at Asp-603. Highly expressed in thymus followed by spleen.

Its subcellular location is the cytoplasm. It localises to the nucleus. It is found in the chromosome. The protein resides in the centromere. The protein localises to the kinetochore. The catalysed reaction is L-seryl-[protein] + ATP = O-phospho-L-seryl-[protein] + ADP + H(+). It catalyses the reaction L-threonyl-[protein] + ATP = O-phospho-L-threonyl-[protein] + ADP + H(+). With respect to regulation, kinase activity stimulated by CENPE. Functionally, essential component of the mitotic checkpoint. Required for normal mitosis progression and tumor suppression. The mitotic checkpoint delays anaphase until all chromosomes are properly attached to the mitotic spindle. One of its checkpoint functions is to inhibit the activity of the anaphase-promoting complex/cyclosome (APC/C) by blocking the binding of CDC20 to APC/C, independently of its kinase activity. The other is to monitor kinetochore activities that depend on the kinetochore motor CENPE. Required for kinetochore localization of CENPE. Negatively regulates PLK1 activity in interphase cells and suppresses centrosome amplification. Also implicated in triggering apoptosis in polyploid cells that exit aberrantly from mitotic arrest. Essential for tumor suppression. May play a role in regulating aging and fertility. This is Mitotic checkpoint serine/threonine-protein kinase BUB1 beta (Bub1b) from Mus musculus (Mouse).